The primary structure comprises 328 residues: Glycerol-3-phosphate dehydrogenase [NAD(P)+] (328 aa).

Trp11, Arg30, and Lys103 together coordinate NADPH. Sn-glycerol 3-phosphate contacts are provided by Lys103, Gly132, and Ser134. Ala136 contributes to the NADPH binding site. Residues Lys187, Asp240, Ser250, Arg251, and Asn252 each coordinate sn-glycerol 3-phosphate. Lys187 acts as the Proton acceptor in catalysis. Residue Arg251 participates in NADPH binding. Residues Val275 and Glu277 each contribute to the NADPH site.

This sequence belongs to the NAD-dependent glycerol-3-phosphate dehydrogenase family.

Its subcellular location is the cytoplasm. It catalyses the reaction sn-glycerol 3-phosphate + NAD(+) = dihydroxyacetone phosphate + NADH + H(+). The catalysed reaction is sn-glycerol 3-phosphate + NADP(+) = dihydroxyacetone phosphate + NADPH + H(+). It participates in membrane lipid metabolism; glycerophospholipid metabolism. In terms of biological role, catalyzes the reduction of the glycolytic intermediate dihydroxyacetone phosphate (DHAP) to sn-glycerol 3-phosphate (G3P), the key precursor for phospholipid synthesis. This is Glycerol-3-phosphate dehydrogenase [NAD(P)+] from Aromatoleum aromaticum (strain DSM 19018 / LMG 30748 / EbN1) (Azoarcus sp. (strain EbN1)).